Consider the following 87-residue polypeptide: UPF0248 protein TSIB_1445 (87 aa).

It belongs to the UPF0248 family.

The chain is UPF0248 protein TSIB_1445 from Thermococcus sibiricus (strain DSM 12597 / MM 739).